Reading from the N-terminus, the 165-residue chain is Endoribonuclease YbeY (165 aa).

Residues H126, H130, and H136 each coordinate Zn(2+).

It belongs to the endoribonuclease YbeY family. Zn(2+) serves as cofactor.

It is found in the cytoplasm. Functionally, single strand-specific metallo-endoribonuclease involved in late-stage 70S ribosome quality control and in maturation of the 3' terminus of the 16S rRNA. The protein is Endoribonuclease YbeY of Ruegeria pomeroyi (strain ATCC 700808 / DSM 15171 / DSS-3) (Silicibacter pomeroyi).